A 281-amino-acid chain; its full sequence is NADH--cytochrome b5 reductase 1 (281 aa).

Residues 13–33 traverse the membrane as a helical segment; sequence ILLGVFVAFVAVGAGAAYFLT. The short motif at 34–40 is the AKR2A-binding sequence (ABS) required for mitochondrion outer membrane targeting element; it reads SSKKRRV. In terms of domain architecture, FAD-binding FR-type spans 45-149; that stretch reads ENFKEFKLVK…KGPKGRFKYQ (105 aa). FAD-binding positions include 129-144 and 155-187; these read REMR…GPKG and AFGM…KVHL. Residue Thr-166 is modified to Phosphothreonine.

Belongs to the flavoprotein pyridine nucleotide cytochrome reductase family. As to quaternary structure, monomer. Interacts with AKR2A. Requires FAD as cofactor. As to expression, expressed in roots, stems, flowers and siliques. Detected in leaves.

It localises to the mitochondrion outer membrane. The enzyme catalyses 2 Fe(III)-[cytochrome b5] + NADH = 2 Fe(II)-[cytochrome b5] + NAD(+) + H(+). Its function is as follows. Reductase transferring electrons from NADH to cytochrome b5. Required for the NADH-dependent electron transfer involved in the desaturation and hydroxylation of fatty acids and in the desaturation of sterol precursors. No activity with NADPH as electron donor. This chain is NADH--cytochrome b5 reductase 1, found in Arabidopsis thaliana (Mouse-ear cress).